The sequence spans 88 residues: MDDVEMKVMEMKMISKMFQGILDACSAKCISKYNEGDLNVGESVCAERCVQKWMETFKKVQSKMSGTQPGQEVPQEAPAAAPEKKGWF.

The Twin CX3C motif motif lies at 25–49 (CSAKCISKYNEGDLNVGESVCAERC). 2 disulfide bridges follow: Cys25/Cys49 and Cys29/Cys45. The disordered stretch occupies residues 63–88 (KMSGTQPGQEVPQEAPAAAPEKKGWF). Residues 68-81 (QPGQEVPQEAPAAA) show a composition bias toward low complexity.

Belongs to the small Tim family. Heterohexamer; composed of 3 copies of timm9 and 3 copies of timm10, named soluble 70 kDa complex. Associates directly with the TIM22 complex, whose core is composed of timm22. Interacts with the transmembrane regions of multi-pass transmembrane proteins in transit.

The protein localises to the mitochondrion inner membrane. In terms of biological role, component of the TIM22 complex, a complex that mediates the import and insertion of multi-pass transmembrane proteins into the mitochondrial inner membrane. The TIM22 complex forms a twin-pore translocase that uses the membrane potential as external driving force. This Dictyostelium discoideum (Social amoeba) protein is Mitochondrial import inner membrane translocase subunit Tim10 (timm10).